The sequence spans 226 residues: Uracil-DNA glycosylase (226 aa).

The active-site Proton acceptor is Asp-64.

The protein belongs to the uracil-DNA glycosylase (UDG) superfamily. UNG family.

The protein localises to the cytoplasm. The enzyme catalyses Hydrolyzes single-stranded DNA or mismatched double-stranded DNA and polynucleotides, releasing free uracil.. Functionally, excises uracil residues from the DNA which can arise as a result of misincorporation of dUMP residues by DNA polymerase or due to deamination of cytosine. This chain is Uracil-DNA glycosylase, found in Vibrio parahaemolyticus serotype O3:K6 (strain RIMD 2210633).